Here is a 599-residue protein sequence, read N- to C-terminus: Elongation factor 4 (599 aa).

In terms of domain architecture, tr-type G spans 4 to 186; sequence ENIRNFSIIA…EIVTKIPPPQ (183 aa). GTP contacts are provided by residues 16-21 and 133-136; these read DHGKST and NKID.

Belongs to the TRAFAC class translation factor GTPase superfamily. Classic translation factor GTPase family. LepA subfamily.

It localises to the cell inner membrane. The enzyme catalyses GTP + H2O = GDP + phosphate + H(+). Functionally, required for accurate and efficient protein synthesis under certain stress conditions. May act as a fidelity factor of the translation reaction, by catalyzing a one-codon backward translocation of tRNAs on improperly translocated ribosomes. Back-translocation proceeds from a post-translocation (POST) complex to a pre-translocation (PRE) complex, thus giving elongation factor G a second chance to translocate the tRNAs correctly. Binds to ribosomes in a GTP-dependent manner. The protein is Elongation factor 4 of Geotalea uraniireducens (strain Rf4) (Geobacter uraniireducens).